The primary structure comprises 44 residues: Photosystem I reaction center subunit IX (44 aa).

The chain crosses the membrane as a helical span at residues 9 to 29 (FVRSAPVVAAIWLSLTAGIII).

It belongs to the PsaJ family.

The protein localises to the cellular thylakoid membrane. Functionally, may help in the organization of the PsaE and PsaF subunits. The protein is Photosystem I reaction center subunit IX of Prochlorococcus marinus (strain MIT 9301).